The primary structure comprises 179 residues: Inosine/xanthosine triphosphatase (179 aa).

E71 is a Mg(2+) binding site. 71-72 lines the substrate pocket; it reads EA.

This sequence belongs to the YjjX NTPase family. Homodimer. Requires Mg(2+) as cofactor. The cofactor is Mn(2+).

The enzyme catalyses XTP + H2O = XDP + phosphate + H(+). It catalyses the reaction ITP + H2O = IDP + phosphate + H(+). Phosphatase that hydrolyzes non-canonical purine nucleotides such as XTP and ITP to their respective diphosphate derivatives. Probably excludes non-canonical purines from DNA/RNA precursor pool, thus preventing their incorporation into DNA/RNA and avoiding chromosomal lesions. This chain is Inosine/xanthosine triphosphatase, found in Shewanella sp. (strain MR-4).